Consider the following 227-residue polypeptide: Cytidylate kinase (227 aa).

12–20 provides a ligand contact to ATP; the sequence is GPSGAGKGT.

This sequence belongs to the cytidylate kinase family. Type 1 subfamily.

The protein localises to the cytoplasm. It carries out the reaction CMP + ATP = CDP + ADP. It catalyses the reaction dCMP + ATP = dCDP + ADP. The protein is Cytidylate kinase of Shigella flexneri.